Here is a 706-residue protein sequence, read N- to C-terminus: D-(-)-3-hydroxybutyrate oligomer hydrolase (706 aa).

Residues 1–27 form the signal peptide; that stretch reads MTIIIAGKNTLTLTSLAAAVLALGACG. Ser311 acts as the Charge relay system in catalysis.

This sequence belongs to the D-(-)-3-hydroxybutyrate oligomer hydrolase family.

It localises to the secreted. It catalyses the reaction (3R)-hydroxybutanoate dimer + H2O = 2 (R)-3-hydroxybutanoate + H(+). Its pathway is lipid metabolism; butanoate metabolism. In terms of biological role, participates in the degradation of poly-3-hydroxybutyrate (PHB). It works downstream of poly(3-hydroxybutyrate) depolymerase, hydrolyzing D(-)-3-hydroxybutyrate oligomers of various length (3HB-oligomers) into 3HB-monomers. The chain is D-(-)-3-hydroxybutyrate oligomer hydrolase from Polaromonas naphthalenivorans (strain CJ2).